Here is a 485-residue protein sequence, read N- to C-terminus: Aerolysin-5 (485 aa).

The N-terminal stretch at 1–23 (MQKLKITGLSLIISGLLMAQRHA) is a signal peptide. 2 cysteine pairs are disulfide-bonded: Cys-42-Cys-98 and Cys-182-Cys-187. Positions 68-84 (WQISGLANGWVIMGPVY) are interaction with host N-linked glycan. The tract at residues 256-288 (YGLSEKVTTKNKFKWPLVGETELSIEIAANQSW) is part of the transmembrane beta-barrel after proteolytic activation of the toxin and insertion into the host membrane. An interaction with glycans from host GPI-anchor region spans residues 346–355 (RWGGNAWYTH). Positions 446-485 (AADGKAPRALSARRGEQGLRLAIPLECRKSSPGLASATSA) are excised as a propeptide.

Belongs to the aerolysin family. Homodimer in solution; homoheptamer in the host membrane. After binding to GPI-anchored proteins in target membranes and proteolytic removal of the C-terminal propeptide, the protein assembles into a heptameric pre-pore complex. A further conformation change leads to insertion into the host membrane. Post-translationally, proteolytic cleavage and subsequent release of the propeptide trigger a major conformation change, leading to the formation of a heptameric pre-pore that then inserts into the host membrane.

The protein localises to the secreted. It is found in the host cell membrane. Its function is as follows. Secreted, cytolytic toxin that forms pores in host membranes after proteolytic removal of a C-terminal propeptide, leading to destruction of the membrane permeability barrier and cell death. The pores are formed by transmembrane beta-strands and are approximately 3 nm in diameter. The chain is Aerolysin-5 (ahh5) from Aeromonas hydrophila.